The following is a 170-amino-acid chain: Ribosome maturation factor RimM (170 aa).

A PRC barrel domain is found at 98–170 (PDEYYWVDLE…RIVVDWDPEF (73 aa)).

This sequence belongs to the RimM family. As to quaternary structure, binds ribosomal protein uS19.

The protein localises to the cytoplasm. Functionally, an accessory protein needed during the final step in the assembly of 30S ribosomal subunit, possibly for assembly of the head region. Essential for efficient processing of 16S rRNA. May be needed both before and after RbfA during the maturation of 16S rRNA. It has affinity for free ribosomal 30S subunits but not for 70S ribosomes. The sequence is that of Ribosome maturation factor RimM from Xylella fastidiosa (strain 9a5c).